The chain runs to 475 residues: NAD-dependent histone deacetylase sir2 (475 aa).

Residues 1 to 12 (MASNPLDNNMPT) are compositionally biased toward polar residues. The interval 1 to 35 (MASNPLDNNMPTTPVEEKIPVASYSPSSSGSSSGA) is disordered. Over residues 20–35 (PVASYSPSSSGSSSGA) the composition is skewed to low complexity. Phosphoserine is present on S55. In terms of domain architecture, Deacetylase sirtuin-type spans 139-436 (KLPHFNTFED…AGWLNELQAL (298 aa)). Residues 164 to 183 (GAGI…NGFY) and 246 to 249 (QNID) contribute to the NAD(+) site. H266 acts as the Proton acceptor in catalysis. 4 residues coordinate Zn(2+): C274, C277, C298, and C301. NAD(+) contacts are provided by residues 373-375 (GTS), 398-400 (SRT), and C416.

The protein belongs to the sirtuin family. Class I subfamily. It depends on Zn(2+) as a cofactor.

The protein resides in the nucleus. It is found in the chromosome. Its subcellular location is the centromere. The protein localises to the telomere. The catalysed reaction is N(6)-acetyl-L-lysyl-[protein] + NAD(+) + H2O = 2''-O-acetyl-ADP-D-ribose + nicotinamide + L-lysyl-[protein]. In terms of biological role, involved in silencing within the mating-type region, at the telomeres, and according to PubMed:12867036 also within centromeric DNA regions. Required for the localization of swi6 to the telomeres, silent mating type region, and according to PubMed:12867036 to the centromeric DNA regions. According to PubMed:15545655 not required for the localization of swi6 to centromeric foci. Deacetylates histone H3 on 'Lys-9' and 'Lys-16' of histone H4. This has a direct role in heterochromatin assembly. The polypeptide is NAD-dependent histone deacetylase sir2 (sir2) (Schizosaccharomyces pombe (strain 972 / ATCC 24843) (Fission yeast)).